We begin with the raw amino-acid sequence, 68 residues long: Stage III sporulation protein AC (68 aa).

2 helical membrane passes run 5–25 (VNVI…HTIL) and 33–53 (YAQW…ATIV).

Its subcellular location is the cell membrane. The polypeptide is Stage III sporulation protein AC (spoIIIAC) (Bacillus subtilis (strain 168)).